The sequence spans 375 residues: Queuine tRNA-ribosyltransferase (375 aa).

Asp94 functions as the Proton acceptor in the catalytic mechanism. Substrate-binding positions include 94–98 (DSGGF), Asp148, Gln191, and Gly218. Residues 249-255 (GVGSPDD) form an RNA binding region. The active-site Nucleophile is the Asp268. Residues 273–277 (TRIAR) are RNA binding; important for wobble base 34 recognition. Residues Cys306, Cys308, Cys311, and His337 each coordinate Zn(2+).

Belongs to the queuine tRNA-ribosyltransferase family. As to quaternary structure, homodimer. Within each dimer, one monomer is responsible for RNA recognition and catalysis, while the other monomer binds to the replacement base PreQ1. The cofactor is Zn(2+).

It catalyses the reaction 7-aminomethyl-7-carbaguanine + guanosine(34) in tRNA = 7-aminomethyl-7-carbaguanosine(34) in tRNA + guanine. It participates in tRNA modification; tRNA-queuosine biosynthesis. Functionally, catalyzes the base-exchange of a guanine (G) residue with the queuine precursor 7-aminomethyl-7-deazaguanine (PreQ1) at position 34 (anticodon wobble position) in tRNAs with GU(N) anticodons (tRNA-Asp, -Asn, -His and -Tyr). Catalysis occurs through a double-displacement mechanism. The nucleophile active site attacks the C1' of nucleotide 34 to detach the guanine base from the RNA, forming a covalent enzyme-RNA intermediate. The proton acceptor active site deprotonates the incoming PreQ1, allowing a nucleophilic attack on the C1' of the ribose to form the product. After dissociation, two additional enzymatic reactions on the tRNA convert PreQ1 to queuine (Q), resulting in the hypermodified nucleoside queuosine (7-(((4,5-cis-dihydroxy-2-cyclopenten-1-yl)amino)methyl)-7-deazaguanosine). This is Queuine tRNA-ribosyltransferase from Thermoanaerobacter sp. (strain X514).